A 29-amino-acid chain; its full sequence is U1-pseudomyrmecitoxin-Pt1 subunit SS1 (29 aa).

The protein belongs to the myrmexin family. As to quaternary structure, heterodimer composed of subunit SS1 and subunit LS1 (U1-PSDTX-Pt1b), and heterodimer composed of subunit SS1 and LS2 (U1-PSDTX-Pt1a); disulfide-linked. As to expression, expressed by the venom gland.

Its subcellular location is the secreted. This heterodimer may have anti-inflammatory properties, since the myrmexin complex (composed of 6 SS-LS heterodimers) inhibits carrageenin-induced edema in a dose-dependent manner (after subcutaneous injection into rats). The polypeptide is U1-pseudomyrmecitoxin-Pt1 subunit SS1 (Pseudomyrmex triplarinus (Ant)).